The primary structure comprises 250 residues: Probable transcriptional regulatory protein SYNPCC7002_A1640 (250 aa).

It belongs to the TACO1 family.

The protein resides in the cytoplasm. The chain is Probable transcriptional regulatory protein SYNPCC7002_A1640 from Picosynechococcus sp. (strain ATCC 27264 / PCC 7002 / PR-6) (Agmenellum quadruplicatum).